We begin with the raw amino-acid sequence, 193 residues long: uncharacterized protein (193 aa).

The interval 158-193 (YNPIYDDHNPLPPEKKKSILSRTRSTKLSSGEITPV) is disordered. Positions 162 to 174 (YDDHNPLPPEKKK) are enriched in basic and acidic residues. Positions 177 to 193 (LSRTRSTKLSSGEITPV) are enriched in polar residues.

This is an uncharacterized protein from Micromonas pusilla (Picoplanktonic green alga).